The primary structure comprises 1129 residues: Protein DWARF 53-LIKE (1129 aa).

In terms of domain architecture, Clp R spans alanine 8–proline 180. Repeat stretches follow at residues leucine 12–leucine 85 and valine 102–proline 180. Residues arginine 519 to arginine 573 are disordered. Positions serine 557–serine 568 are enriched in low complexity. Residues leucine 577–leucine 581 carry the EAR 1 motif. The segment at lysine 587–valine 654 is disordered. Polar residues predominate over residues glycine 596–aspartate 608. The segment covering lysine 645–valine 654 has biased composition (basic and acidic residues). 2 short sequence motifs (EAR) span residues leucine 798–leucine 802 and phenylalanine 975–proline 980. Positions phenylalanine 975 to glycine 1001 are disordered. Positions valine 981–aspartate 992 are enriched in acidic residues.

The protein belongs to the ClpA/ClpB family. Post-translationally, polyubiquitinated. Strigolactone, but not karrikin, triggers rapid SCF(D3)-dependent degradation via the proteasome.

Repressor of strigolactones (SL) signaling. Subjected to a negative feedback control of SL signaling. The sequence is that of Protein DWARF 53-LIKE from Oryza sativa subsp. japonica (Rice).